The chain runs to 320 residues: Cytochrome f (320 aa).

The signal sequence occupies residues 1-35 (MQTRNTFSSIKEEITRSISVSLMIYIITWAPVSNA). Residues Tyr-36, Cys-56, Cys-59, and His-60 each coordinate heme. A helical membrane pass occupies residues 286 to 306 (VQGLLFFFASVILAQIFLVLK).

Belongs to the cytochrome f family. In terms of assembly, the 4 large subunits of the cytochrome b6-f complex are cytochrome b6, subunit IV (17 kDa polypeptide, petD), cytochrome f and the Rieske protein, while the 4 small subunits are PetG, PetL, PetM and PetN. The complex functions as a dimer. Heme is required as a cofactor.

It localises to the plastid. The protein resides in the chloroplast thylakoid membrane. Functionally, component of the cytochrome b6-f complex, which mediates electron transfer between photosystem II (PSII) and photosystem I (PSI), cyclic electron flow around PSI, and state transitions. In Cucumis sativus (Cucumber), this protein is Cytochrome f.